The sequence spans 328 residues: tRNA uridine(34) hydroxylase (328 aa).

Positions leucine 130–glutamate 224 constitute a Rhodanese domain. Cysteine 184 (cysteine persulfide intermediate) is an active-site residue.

This sequence belongs to the TrhO family.

The enzyme catalyses uridine(34) in tRNA + AH2 + O2 = 5-hydroxyuridine(34) in tRNA + A + H2O. In terms of biological role, catalyzes oxygen-dependent 5-hydroxyuridine (ho5U) modification at position 34 in tRNAs. The chain is tRNA uridine(34) hydroxylase from Streptococcus pneumoniae (strain Taiwan19F-14).